The primary structure comprises 120 residues: uncharacterized protein (120 aa).

The tract at residues proline 80–alanine 99 is disordered.

This is an uncharacterized protein from Goose circovirus (GoCV).